Reading from the N-terminus, the 62-residue chain is Toxin Tb2-II (62 aa).

The LCN-type CS-alpha/beta domain occupies 1 to 62; that stretch reads KEGYAMDHEG…KVWDYATNKC (62 aa). 4 disulfides stabilise this stretch: Cys11-Cys62, Cys15-Cys38, Cys23-Cys43, and Cys27-Cys45.

This sequence belongs to the long (4 C-C) scorpion toxin superfamily. Sodium channel inhibitor family. Beta subfamily. In terms of tissue distribution, expressed by the venom gland.

It is found in the secreted. Functionally, beta toxins bind voltage-independently at site-4 of sodium channels (Nav) and shift the voltage of activation toward more negative potentials thereby affecting sodium channel activation and promoting spontaneous and repetitive firing. This toxin is active against both mammals and insects. This is Toxin Tb2-II from Tityus bahiensis (Brazilian scorpion).